The following is a 105-amino-acid chain: uncharacterized protein (105 aa).

The 41-residue stretch at 2–42 (QVLIGTKLVTEGIDIKQLMMVIMLDNRLNIIELIQGVGRLR) folds into the Helicase C-terminal domain.

It belongs to the helicase family. Yeast subtelomeric Y' repeat subfamily.

This is an uncharacterized protein from Saccharomyces cerevisiae (strain ATCC 204508 / S288c) (Baker's yeast).